A 309-amino-acid polypeptide reads, in one-letter code: Ribosomal RNA small subunit methyltransferase H (309 aa).

S-adenosyl-L-methionine is bound by residues 33-35, Asp-53, Phe-79, Asp-100, and Gln-107; that span reads GGH.

The protein belongs to the methyltransferase superfamily. RsmH family.

It is found in the cytoplasm. It carries out the reaction cytidine(1402) in 16S rRNA + S-adenosyl-L-methionine = N(4)-methylcytidine(1402) in 16S rRNA + S-adenosyl-L-homocysteine + H(+). In terms of biological role, specifically methylates the N4 position of cytidine in position 1402 (C1402) of 16S rRNA. In Clostridium botulinum (strain 657 / Type Ba4), this protein is Ribosomal RNA small subunit methyltransferase H.